The chain runs to 151 residues: Nucleoside diphosphate kinase (151 aa).

The ATP site is built by lysine 11, phenylalanine 59, arginine 87, arginine 104, and asparagine 114. Histidine 117 functions as the Pros-phosphohistidine intermediate in the catalytic mechanism.

It belongs to the NDK family. In terms of assembly, homotrimer. Mg(2+) serves as cofactor.

It catalyses the reaction a 2'-deoxyribonucleoside 5'-diphosphate + ATP = a 2'-deoxyribonucleoside 5'-triphosphate + ADP. The catalysed reaction is a ribonucleoside 5'-diphosphate + ATP = a ribonucleoside 5'-triphosphate + ADP. Its function is as follows. Major role in the synthesis of nucleoside triphosphates other than ATP. The ATP gamma phosphate is transferred to the NDP beta phosphate via a ping-pong mechanism, using a phosphorylated active-site intermediate. This chain is Nucleoside diphosphate kinase (ndk1), found in Schizosaccharomyces pombe (strain 972 / ATCC 24843) (Fission yeast).